The following is a 315-amino-acid chain: Methionyl-tRNA formyltransferase (315 aa).

107–110 is a binding site for (6S)-5,6,7,8-tetrahydrofolate; sequence SLLP.

This sequence belongs to the Fmt family.

The catalysed reaction is L-methionyl-tRNA(fMet) + (6R)-10-formyltetrahydrofolate = N-formyl-L-methionyl-tRNA(fMet) + (6S)-5,6,7,8-tetrahydrofolate + H(+). Attaches a formyl group to the free amino group of methionyl-tRNA(fMet). The formyl group appears to play a dual role in the initiator identity of N-formylmethionyl-tRNA by promoting its recognition by IF2 and preventing the misappropriation of this tRNA by the elongation apparatus. The polypeptide is Methionyl-tRNA formyltransferase (Borreliella afzelii (strain PKo) (Borrelia afzelii)).